The chain runs to 693 residues: Glycine--tRNA ligase beta subunit (693 aa).

The protein belongs to the class-II aminoacyl-tRNA synthetase family. As to quaternary structure, tetramer of two alpha and two beta subunits.

Its subcellular location is the cytoplasm. It catalyses the reaction tRNA(Gly) + glycine + ATP = glycyl-tRNA(Gly) + AMP + diphosphate. The protein is Glycine--tRNA ligase beta subunit (glyS) of Halalkalibacterium halodurans (strain ATCC BAA-125 / DSM 18197 / FERM 7344 / JCM 9153 / C-125) (Bacillus halodurans).